Here is a 213-residue protein sequence, read N- to C-terminus: Redox-sensing transcriptional repressor Rex (213 aa).

A DNA-binding region (H-T-H motif) is located at residues 18-57 (LYYRIFKRFHAEKIERANSKQIAEAIGIDSATVRRDFSYF). 92-97 (GIGNMG) is a binding site for NAD(+).

It belongs to the transcriptional regulatory Rex family. In terms of assembly, homodimer.

It is found in the cytoplasm. Its function is as follows. Modulates transcription in response to changes in cellular NADH/NAD(+) redox state. Binds to the promoter of the aldehyde-alcohol dehydrogenase adhE gene. Functions as a redox-dependent repressor of adhE expression. This Streptococcus pneumoniae (strain ATCC BAA-255 / R6) protein is Redox-sensing transcriptional repressor Rex.